The sequence spans 37 residues: Omega/M-ectatotoxin-Et1a subunit A (37 aa).

The cysteines at positions 12 and 34 are disulfide-linked.

The protein belongs to the ectatomin family. Ectatomin-Et subfamily. Heterodimer of an A and a B chain; disulfide-linked. Expressed by the venom gland.

It is found in the secreted. Its subcellular location is the target cell membrane. In terms of biological role, algogenic for animals, human and insects. At high concentrations (0.5-1 uM), it acts as a pore-forming protein that forms nonselective cation channels both in cell and artificial membranes. It is weakly selective for cation over anions channel conductance is identical in both directions. At lower concentrations (1-10 nM), this heterodimer inhibits cardiac L-type calcium currents in isolated rat cardiac ventricular myocytes. In Ectatomma tuberculatum (Selva ant), this protein is Omega/M-ectatotoxin-Et1a subunit A.